Here is a 435-residue protein sequence, read N- to C-terminus: Methylenetetrahydrofolate--tRNA-(uracil-5-)-methyltransferase TrmFO (435 aa).

Position 10 to 15 (10 to 15 (GAGLAG)) interacts with FAD.

The protein belongs to the MnmG family. TrmFO subfamily. Requires FAD as cofactor.

The protein resides in the cytoplasm. It catalyses the reaction uridine(54) in tRNA + (6R)-5,10-methylene-5,6,7,8-tetrahydrofolate + NADH + H(+) = 5-methyluridine(54) in tRNA + (6S)-5,6,7,8-tetrahydrofolate + NAD(+). It carries out the reaction uridine(54) in tRNA + (6R)-5,10-methylene-5,6,7,8-tetrahydrofolate + NADPH + H(+) = 5-methyluridine(54) in tRNA + (6S)-5,6,7,8-tetrahydrofolate + NADP(+). Its function is as follows. Catalyzes the folate-dependent formation of 5-methyl-uridine at position 54 (M-5-U54) in all tRNAs. The chain is Methylenetetrahydrofolate--tRNA-(uracil-5-)-methyltransferase TrmFO from Halalkalibacterium halodurans (strain ATCC BAA-125 / DSM 18197 / FERM 7344 / JCM 9153 / C-125) (Bacillus halodurans).